Here is a 590-residue protein sequence, read N- to C-terminus: Beta-fructofuranosidase, insoluble isoenzyme CWINV2 (590 aa).

The signal sequence occupies residues 1–25 (MSAPKFGYVLLLIVLINISNNGVDA). Substrate is bound by residues 59-62 (WIND), glutamine 78, and tryptophan 86. The active site involves aspartate 62. N-linked (GlcNAc...) asparagine glycosylation occurs at asparagine 118. 121–122 (WS) contributes to the substrate binding site. N-linked (GlcNAc...) asparagine glycosylation is found at asparagine 143 and asparagine 180. Substrate is bound by residues 185 to 186 (RD), glutamate 241, and aspartate 275. An N-linked (GlcNAc...) asparagine glycan is attached at asparagine 335. A disulfide bridge connects residues cysteine 435 and cysteine 483. Asparagine 564 is a glycosylation site (N-linked (GlcNAc...) asparagine).

The protein belongs to the glycosyl hydrolase 32 family. As to expression, expressed in flowers, and seeds.

Its subcellular location is the secreted. The protein resides in the extracellular space. It is found in the apoplast. It localises to the cell wall. The catalysed reaction is Hydrolysis of terminal non-reducing beta-D-fructofuranoside residues in beta-D-fructofuranosides.. The protein is Beta-fructofuranosidase, insoluble isoenzyme CWINV2 (CWINV2) of Arabidopsis thaliana (Mouse-ear cress).